The sequence spans 272 residues: Replication-associated protein A (272 aa).

The CRESS-DNA virus Rep endonuclease domain occupies 11–114 (SHRNANTFLT…PLAVFERGTF (104 aa)). The RCR-1 motif lies at 18 to 21 (FLTY). 3 residues coordinate a divalent metal cation: Glu52, His60, and His62. Positions 60-62 (HLH) match the RCR-2 motif. The For DNA cleavage activity role is filled by Tyr100. The short motif at 100–103 (YILK) is the RCR-3 element. Glu104 lines the a divalent metal cation pocket. The tract at residues 175-187 (SANKLFPEIQEEF) is oligomerization. Positions 198–202 (LLCNE) are binding to RBR1. A transactivation region spans residues 221 to 230 (MLLQPACYTL). The disordered stretch occupies residues 245-272 (SHQMKDQESRASTSSAQQEQENLLGPEA). Residues 254–265 (RASTSSAQQEQE) show a composition bias toward polar residues.

This sequence belongs to the geminiviridae Rep protein family. As to quaternary structure, homooligomer. Interacts with host retinoblastoma-related protein 1 (RBR1), and may thereby deregulate the host cell cycle. Part of the C- and V-complexes which are RepA-Rep-DNA complexes involved in the c-sense and v-sense transcription. Mg(2+) serves as cofactor. It depends on Mn(2+) as a cofactor.

The protein resides in the host nucleus. It is found in the host cytoplasm. Functionally, implicated in enhancement of V-sense gene expression. Acts a an inhibitor of C-sense gene transcription. This Avena sativa (Oat) protein is Replication-associated protein A.